The primary structure comprises 354 residues: Bacteriochlorophyll a protein (354 aa).

The bacteriochlorophyll a site is built by His99, His134, His278, His285, and His286.

As to quaternary structure, homotrimer. Each subunit contains 7 molecules of bacteriochlorophyll a.

Intermediary in the transfer of excitation energy from the chlorophyll to the reaction centers. The sequence is that of Bacteriochlorophyll a protein (fmoA) from Chlorobaculum thiosulfatiphilum (Chlorobium limicola f.sp. thiosulfatophilum).